A 243-amino-acid chain; its full sequence is Protein S40-7 (243 aa).

Disordered regions lie at residues 1–68 (MNKN…KSGL) and 107–143 (SSTA…ERLP). Positions 10–20 (SSPSSLATISD) are enriched in polar residues. The span at 22 to 32 (ADGELNEDDIF) shows a compositional bias: acidic residues. Positions 47 to 67 (PVSSPAKQQTPARQLQRSKSG) are enriched in polar residues.

Belongs to the senescence regulator S40 family.

Its subcellular location is the cytoplasm. The polypeptide is Protein S40-7 (Arabidopsis thaliana (Mouse-ear cress)).